Reading from the N-terminus, the 183-residue chain is Large ribosomal subunit protein mL43 (183 aa).

Disordered regions lie at residues H120–G144 and P162–E183. The span at D122–P139 shows a compositional bias: polar residues. A compositionally biased stretch (basic and acidic residues) spans P162 to I172.

The protein belongs to the mitochondrion-specific ribosomal protein mL43 family. As to quaternary structure, component of the mitochondrial ribosome large subunit (39S) which comprises a 16S rRNA and about 50 distinct proteins. Ubiquitous with the highest levels in the liver, heart and kidneys. The skeletal muscle, brain and testis showed lower but detectable expression. Expression is coregulated with TWNK.

The protein localises to the mitochondrion. This is Large ribosomal subunit protein mL43 (Mrpl43) from Mus musculus (Mouse).